A 748-amino-acid polypeptide reads, in one-letter code: Cysteine--tRNA ligase, cytoplasmic (748 aa).

Positions 1–25 (MAGSSGQQGKGRRVQPQWSPPAGTQ) are disordered. A2 carries the N-acetylalanine modification. At S19 the chain carries Phosphoserine. Residue C55 participates in Zn(2+) binding. G56 contacts L-cysteine. The short motif at 57 to 67 (PTVYDASHMGH) is the 'HIGH' region element. T96 contributes to the L-cysteine binding site. The 'KIIK' region signature appears at 101-104 (KIIK). Phosphoserine is present on residues S305 and S307. C348, H373, and E377 together coordinate Zn(2+). L-cysteine is bound at residue H373. The 'KMSKS' region signature appears at 406 to 410 (KMSKS). An ATP-binding site is contributed by K409. Basic and acidic residues-rich tracts occupy residues 654-679 (KRQVEEEKRKKKEEAARRKQEQEAAK) and 700-717 (KFDENGLPTHDAEGKELS). Disordered regions lie at residues 654–686 (KRQVEEEKRKKKEEAARRKQEQEAAKLAKMKIP) and 700–721 (KFDENGLPTHDAEGKELSKGQA). S746 is subject to Phosphoserine.

As to quaternary structure, homodimer. Zn(2+) serves as cofactor.

It is found in the cytoplasm. The enzyme catalyses tRNA(Cys) + L-cysteine + ATP = L-cysteinyl-tRNA(Cys) + AMP + diphosphate. In terms of biological role, catalyzes the ATP-dependent ligation of cysteine to tRNA(Cys). In Macaca fascicularis (Crab-eating macaque), this protein is Cysteine--tRNA ligase, cytoplasmic (CARS1).